Consider the following 461-residue polypeptide: NADP-specific glutamate dehydrogenase (461 aa).

The active site involves K115.

This sequence belongs to the Glu/Leu/Phe/Val dehydrogenases family. Homohexamer.

The catalysed reaction is L-glutamate + NADP(+) + H2O = 2-oxoglutarate + NH4(+) + NADPH + H(+). This is NADP-specific glutamate dehydrogenase (GDH) from Penicillium chrysogenum (Penicillium notatum).